A 94-amino-acid polypeptide reads, in one-letter code: MKFFMVFVVTFCLAVCFVSQSLAIPADAANDAHFVDGVQALKEIEPELHGRYKRATCDLLSGTGINHSACAAHCLLRGNRGGYCNGKGVCVCRN.

The signal sequence occupies residues 1–23 (MKFFMVFVVTFCLAVCFVSQSLA). Positions 24-54 (IPADAANDAHFVDGVQALKEIEPELHGRYKR) are excised as a propeptide. 3 cysteine pairs are disulfide-bonded: C57/C84, C70/C90, and C74/C92.

This sequence belongs to the invertebrate defensin family. Type 1 subfamily.

It localises to the secreted. Its function is as follows. Responsible for the anti Gram-positive activity of immune hemolymph of P.terraenovae. The chain is Phormicin from Protophormia terraenovae (Northern blowfly).